The following is a 641-amino-acid chain: Probable ATP-dependent helicase YpvA (641 aa).

The region spanning 29-303 (YDILPEKGFD…EFAELIEDAL (275 aa)) is the Helicase ATP-binding domain. Residue 64 to 71 (AGVGTGKT) participates in ATP binding. [4Fe-4S] cluster-binding residues include cysteine 133, cysteine 197, cysteine 200, and cysteine 206. Positions 257-260 (DEGH) match the DEGH box motif.

This sequence belongs to the helicase family. DinG subfamily. [4Fe-4S] cluster is required as a cofactor.

It catalyses the reaction Couples ATP hydrolysis with the unwinding of duplex DNA at the replication fork by translocating in the 5'-3' direction. This creates two antiparallel DNA single strands (ssDNA). The leading ssDNA polymer is the template for DNA polymerase III holoenzyme which synthesizes a continuous strand.. The enzyme catalyses ATP + H2O = ADP + phosphate + H(+). In terms of biological role, might be a 5'-3' DNA helicase. This chain is Probable ATP-dependent helicase YpvA (ypvA), found in Bacillus subtilis (strain 168).